Consider the following 199-residue polypeptide: Protein CPL1 (199 aa).

The signal sequence occupies residues 1 to 30 (MFSIPPSVRRLVFLFLIAAPLLSIVLPVAA). Residues 34–58 (GVDPPSKLQPRAPQPSRRMGATKRS) form a disordered region. An N-linked (GlcNAc...) asparagine glycan is attached at asparagine 148.

The protein resides in the secreted. In terms of biological role, virulence factor which promotes fungal virulence by enhancing type 2 inflammation in the mouse host. Likely binds mouse Tlr4 independently of Ly96/Md2 and activates Tlr4 signaling to drive Stat3 phosphorylation in interstitial macrophages, which promotes the initial induction of Arg1/arginase-1 and increases macrophage sensitivity to Il4 signaling. The polypeptide is Protein CPL1 (Cryptococcus neoformans var. grubii serotype A (strain H99 / ATCC 208821 / CBS 10515 / FGSC 9487) (Filobasidiella neoformans var. grubii)).